Consider the following 153-residue polypeptide: ATP synthase subunit b' (153 aa).

A helical transmembrane segment spans residues L23–F40.

Belongs to the ATPase B chain family. F-type ATPases have 2 components, F(1) - the catalytic core - and F(0) - the membrane proton channel. F(1) has five subunits: alpha(3), beta(3), gamma(1), delta(1), epsilon(1). F(0) has four main subunits: a(1), b(1), b'(1) and c(10-14). The alpha and beta chains form an alternating ring which encloses part of the gamma chain. F(1) is attached to F(0) by a central stalk formed by the gamma and epsilon chains, while a peripheral stalk is formed by the delta, b and b' chains.

The protein resides in the cellular thylakoid membrane. F(1)F(0) ATP synthase produces ATP from ADP in the presence of a proton or sodium gradient. F-type ATPases consist of two structural domains, F(1) containing the extramembraneous catalytic core and F(0) containing the membrane proton channel, linked together by a central stalk and a peripheral stalk. During catalysis, ATP synthesis in the catalytic domain of F(1) is coupled via a rotary mechanism of the central stalk subunits to proton translocation. In terms of biological role, component of the F(0) channel, it forms part of the peripheral stalk, linking F(1) to F(0). The b'-subunit is a diverged and duplicated form of b found in plants and photosynthetic bacteria. The chain is ATP synthase subunit b' from Prochlorococcus marinus (strain MIT 9515).